The sequence spans 427 residues: Trigger factor (427 aa).

The 86-residue stretch at 163–248 (GDTVVIDFVG…VHEVKAKEVP (86 aa)) folds into the PPIase FKBP-type domain.

The protein belongs to the FKBP-type PPIase family. Tig subfamily.

It is found in the cytoplasm. It catalyses the reaction [protein]-peptidylproline (omega=180) = [protein]-peptidylproline (omega=0). Functionally, involved in protein export. Acts as a chaperone by maintaining the newly synthesized protein in an open conformation. Functions as a peptidyl-prolyl cis-trans isomerase. The sequence is that of Trigger factor from Streptococcus equi subsp. equi (strain 4047).